Reading from the N-terminus, the 478-residue chain is FERM domain-containing protein B (478 aa).

Disordered stretches follow at residues 19 to 39 (ELIPTQSQGSPSLSSSSTITS), 129 to 196 (EENS…GFLT), and 202 to 221 (KAQSPQLQSQSSSLSTTIAS). Low complexity-rich tracts occupy residues 22-39 (PTQSQGSPSLSSSSTITS) and 129-164 (EENSPSSSTSSPILSGLSSIRGKKSNASSTSNANDG). The 421-residue stretch at 48–468 (VLIRIYFIDD…DWSEEWESKE (421 aa)) folds into the FERM domain. Over residues 165–179 (SGSGSGSGSGSGSGS) the composition is skewed to gly residues. 2 stretches are compositionally biased toward low complexity: residues 180–189 (GTSTPNSPKG) and 204–216 (QSPQLQSQSSSLS).

This is FERM domain-containing protein B (frmB) from Dictyostelium discoideum (Social amoeba).